The chain runs to 78 residues: Small ribosomal subunit protein bS20 (78 aa).

It belongs to the bacterial ribosomal protein bS20 family.

Binds directly to 16S ribosomal RNA. This Streptococcus pneumoniae serotype 4 (strain ATCC BAA-334 / TIGR4) protein is Small ribosomal subunit protein bS20.